The following is a 509-amino-acid chain: ATP synthase subunit alpha (509 aa).

169-176 (GDRQTGKT) contacts ATP.

This sequence belongs to the ATPase alpha/beta chains family. F-type ATPases have 2 components, CF(1) - the catalytic core - and CF(0) - the membrane proton channel. CF(1) has five subunits: alpha(3), beta(3), gamma(1), delta(1), epsilon(1). CF(0) has three main subunits: a(1), b(2) and c(9-12). The alpha and beta chains form an alternating ring which encloses part of the gamma chain. CF(1) is attached to CF(0) by a central stalk formed by the gamma and epsilon chains, while a peripheral stalk is formed by the delta and b chains.

The protein localises to the cell inner membrane. It catalyses the reaction ATP + H2O + 4 H(+)(in) = ADP + phosphate + 5 H(+)(out). Produces ATP from ADP in the presence of a proton gradient across the membrane. The alpha chain is a regulatory subunit. The protein is ATP synthase subunit alpha of Rhizobium etli (strain ATCC 51251 / DSM 11541 / JCM 21823 / NBRC 15573 / CFN 42).